We begin with the raw amino-acid sequence, 865 residues long: Fanconi-associated nuclease 1 homolog (865 aa).

Residues 35–62 (GKICPLCETKFSLASYKSHMNTCNVADD) form a UBZ4-type zinc finger. Residues Cys38, Cys41, His53, and Cys57 each coordinate Zn(2+). Disordered stretches follow at residues 90–140 (DASF…SLDV) and 162–187 (RRSS…PVKK). 2 stretches are compositionally biased toward basic and acidic residues: residues 93–112 (FSDK…REVP) and 174–187 (DQAD…PVKK). Residues Glu682, Asp810, Glu825, and Val826 each contribute to the Mn(2+) site. The VRR-NUC domain occupies 744-857 (QELIEENIRK…GIRAEVCHVA (114 aa)).

Belongs to the FAN1 family. The cofactor is Mn(2+). Mg(2+) is required as a cofactor.

Its subcellular location is the nucleus. It carries out the reaction Hydrolytically removes 5'-nucleotides successively from the 3'-hydroxy termini of 3'-hydroxy-terminated oligonucleotides.. Nuclease required for the repair of DNA interstrand cross-links (ICL). Acts as a 5'-3' exonuclease that anchors at a cut end of DNA and cleaves DNA successively at every third nucleotide, allowing to excise an ICL from one strand through flanking incisions. The protein is Fanconi-associated nuclease 1 homolog (fan-1) of Caenorhabditis elegans.